The chain runs to 967 residues: Phosphoenolpyruvate carboxylase 1 (967 aa).

At serine 11 the chain carries Phosphoserine. Residues histidine 173 and lysine 602 contribute to the active site. Phosphoserine is present on serine 704.

The protein belongs to the PEPCase type 1 family. In terms of assembly, homotetramer. Mg(2+) is required as a cofactor. It depends on Mn(2+) as a cofactor. The phosphorylation of Ser-11 is reversibly promoted by inorganic phosphate (Pi) deprivation. Enhanced activity by phosphorylation at pH 7.3 by lowering Km and sensitivity to inhibition by L-malate and L-aspartate, while enhancing activation by glucose 6-phosphate. Expressed in all plant organs, with higher levels in roots.

Its subcellular location is the cytoplasm. It catalyses the reaction oxaloacetate + phosphate = phosphoenolpyruvate + hydrogencarbonate. By light-reversible phosphorylation. Activated by inorganic phosphate (Pi) deprivation and glucose 6-phosphate. Inhibited by L-malate and L-aspartate. Functionally, through the carboxylation of phosphoenolpyruvate (PEP) it forms oxaloacetate, a four-carbon dicarboxylic acid source for the tricarboxylic acid cycle. Contributes probably to the adaptation to inorganic phosphate (Pi) deprivation. This is Phosphoenolpyruvate carboxylase 1 (PPC1) from Arabidopsis thaliana (Mouse-ear cress).